Consider the following 482-residue polypeptide: Cis-aconitate decarboxylase-like protein oryM (482 aa).

The protein belongs to the PrpD family.

The protein operates within secondary metabolite biosynthesis. Cis-aconitate decarboxylase-like protein; part of the gene cluster that mediates the biosynthesis of oryzines, natural products with an unusual maleidride backbone. The two subunits of the fungal fatty acid synthase oryfasA and oryfasB probably form octenoic acid. This fatty acid is most likely activated by the acyl-CoA ligase oryP to give octenyl-CoA before the citrate synthase-like protein oryE catalyzes condensation with oxaloacetate to form tricarboxylic acid. The next steps of the pathways are conjectural, but a favorite possible route has been proposed, beginning with decarboxylation and concomitant dehydration by the decarboxylase oryM, followed by tautomerization, which may lead to the production of a diene intermediate. Reduction of this diene intermediate could give the known metabolite piliformic acid. On the pathway to oryzine B and oryzine A, however, hydroxylation of the diene by the alpha-ketoglutarate-dependent dioxygenase oryG and lactonisation by the lactonohydrolases oryH or oryL could give oryzine B directly. Finally, enoyl reduction by the dehydrogenase oryD would then convert oryzine B into oryzine A. The polypeptide is Cis-aconitate decarboxylase-like protein oryM (Aspergillus oryzae (strain ATCC 42149 / RIB 40) (Yellow koji mold)).